The sequence spans 332 residues: Holliday junction branch migration complex subunit RuvB (332 aa).

Residues 1–181 are large ATPase domain (RuvB-L); that stretch reads MARILDNDVM…FGITGHMEYY (181 aa). ATP is bound by residues L20, R21, G62, K65, T66, T67, 128–130, R171, Y181, and R218; that span reads EDF. A Mg(2+)-binding site is contributed by T66. The small ATPAse domain (RuvB-S) stretch occupies residues 182–252; sequence QEKDLTEIVE…ITDRALTMLD (71 aa). A head domain (RuvB-H) region spans residues 255–332; that stretch reads REGLDYIDQK…RHLGYPYQNT (78 aa). DNA contacts are provided by R291, R310, R312, and R315.

The protein belongs to the RuvB family. As to quaternary structure, homohexamer. Forms an RuvA(8)-RuvB(12)-Holliday junction (HJ) complex. HJ DNA is sandwiched between 2 RuvA tetramers; dsDNA enters through RuvA and exits via RuvB. An RuvB hexamer assembles on each DNA strand where it exits the tetramer. Each RuvB hexamer is contacted by two RuvA subunits (via domain III) on 2 adjacent RuvB subunits; this complex drives branch migration. In the full resolvosome a probable DNA-RuvA(4)-RuvB(12)-RuvC(2) complex forms which resolves the HJ.

The protein localises to the cytoplasm. The catalysed reaction is ATP + H2O = ADP + phosphate + H(+). The RuvA-RuvB-RuvC complex processes Holliday junction (HJ) DNA during genetic recombination and DNA repair, while the RuvA-RuvB complex plays an important role in the rescue of blocked DNA replication forks via replication fork reversal (RFR). RuvA specifically binds to HJ cruciform DNA, conferring on it an open structure. The RuvB hexamer acts as an ATP-dependent pump, pulling dsDNA into and through the RuvAB complex. RuvB forms 2 homohexamers on either side of HJ DNA bound by 1 or 2 RuvA tetramers; 4 subunits per hexamer contact DNA at a time. Coordinated motions by a converter formed by DNA-disengaged RuvB subunits stimulates ATP hydrolysis and nucleotide exchange. Immobilization of the converter enables RuvB to convert the ATP-contained energy into a lever motion, pulling 2 nucleotides of DNA out of the RuvA tetramer per ATP hydrolyzed, thus driving DNA branch migration. The RuvB motors rotate together with the DNA substrate, which together with the progressing nucleotide cycle form the mechanistic basis for DNA recombination by continuous HJ branch migration. Branch migration allows RuvC to scan DNA until it finds its consensus sequence, where it cleaves and resolves cruciform DNA. The sequence is that of Holliday junction branch migration complex subunit RuvB from Streptococcus pyogenes serotype M3 (strain ATCC BAA-595 / MGAS315).